The sequence spans 800 residues: Cation/H(+) antiporter 19 (800 aa).

12 consecutive transmembrane segments (helical) span residues 30-50 (FALPLIILQIVLVVVFTRLLA), 60-77 (RVIAEIIGGILLGPSALG), 92-112 (LTVLDTLANIGLLFFLFLVGL), 127-147 (LLIAIAGISLPFIVGVGTSFV), 158-178 (QLPFIVFMGVALSITAFPVLA), 196-216 (MSAAGVNDVAAWILLALAIAL), 224-244 (LVSVWVLLCGTGFVIFAVVAI), 278-298 (FVTDTIGIHALFGAFVVGIVA), 315-335 (LVSGLLLPLYFAASGLKTDVT), 343-363 (WGLLVLVILTTCFGKIVGTVG), 375-395 (AVTLGFLMNTKGLVELIVLNI), and 408-428 (AILVLMALFTTFITTPIVMLI). The disordered stretch occupies residues 776 to 800 (ADTRPLVEEDAEYDQSSRDISDLTA). Residues 790 to 800 (QSSRDISDLTA) show a composition bias toward basic and acidic residues.

The protein belongs to the monovalent cation:proton antiporter 2 (CPA2) transporter (TC 2.A.37) family. CHX (TC 2.A.37.4) subfamily. Expressed in the whole plant but preferentially in pollen.

It is found in the membrane. May operate as a cation/H(+) antiporter. In Arabidopsis thaliana (Mouse-ear cress), this protein is Cation/H(+) antiporter 19 (CHX19).